The primary structure comprises 259 residues: Deoxyribose-phosphate aldolase (259 aa).

The Proton donor/acceptor role is filled by Asp-102. The active-site Schiff-base intermediate with acetaldehyde is Lys-167. Lys-201 functions as the Proton donor/acceptor in the catalytic mechanism.

Belongs to the DeoC/FbaB aldolase family. DeoC type 2 subfamily.

Its subcellular location is the cytoplasm. It catalyses the reaction 2-deoxy-D-ribose 5-phosphate = D-glyceraldehyde 3-phosphate + acetaldehyde. It functions in the pathway carbohydrate degradation; 2-deoxy-D-ribose 1-phosphate degradation; D-glyceraldehyde 3-phosphate and acetaldehyde from 2-deoxy-alpha-D-ribose 1-phosphate: step 2/2. Functionally, catalyzes a reversible aldol reaction between acetaldehyde and D-glyceraldehyde 3-phosphate to generate 2-deoxy-D-ribose 5-phosphate. In Erwinia tasmaniensis (strain DSM 17950 / CFBP 7177 / CIP 109463 / NCPPB 4357 / Et1/99), this protein is Deoxyribose-phosphate aldolase.